Here is a 339-residue protein sequence, read N- to C-terminus: Anthranilate phosphoribosyltransferase (339 aa).

5-phospho-alpha-D-ribose 1-diphosphate contacts are provided by residues glycine 79, 82–83, threonine 87, 89–92, 107–115, and serine 119; these read GD, NVST, and KHGNRAVSS. Glycine 79 provides a ligand contact to anthranilate. Serine 91 contacts Mg(2+). Asparagine 110 contacts anthranilate. Residue arginine 165 participates in anthranilate binding. Residues aspartate 224 and glutamate 225 each contribute to the Mg(2+) site.

The protein belongs to the anthranilate phosphoribosyltransferase family. In terms of assembly, homodimer. Requires Mg(2+) as cofactor.

The catalysed reaction is N-(5-phospho-beta-D-ribosyl)anthranilate + diphosphate = 5-phospho-alpha-D-ribose 1-diphosphate + anthranilate. It participates in amino-acid biosynthesis; L-tryptophan biosynthesis; L-tryptophan from chorismate: step 2/5. In terms of biological role, catalyzes the transfer of the phosphoribosyl group of 5-phosphorylribose-1-pyrophosphate (PRPP) to anthranilate to yield N-(5'-phosphoribosyl)-anthranilate (PRA). In Geobacillus kaustophilus (strain HTA426), this protein is Anthranilate phosphoribosyltransferase.